A 350-amino-acid polypeptide reads, in one-letter code: Phenylalanine--tRNA ligase alpha subunit (350 aa).

Mg(2+) is bound at residue Glu-257.

Belongs to the class-II aminoacyl-tRNA synthetase family. Phe-tRNA synthetase alpha subunit type 1 subfamily. In terms of assembly, tetramer of two alpha and two beta subunits. Requires Mg(2+) as cofactor.

Its subcellular location is the cytoplasm. It carries out the reaction tRNA(Phe) + L-phenylalanine + ATP = L-phenylalanyl-tRNA(Phe) + AMP + diphosphate + H(+). The protein is Phenylalanine--tRNA ligase alpha subunit of Listeria monocytogenes serotype 4a (strain HCC23).